A 400-amino-acid chain; its full sequence is Formate-dependent phosphoribosylglycinamide formyltransferase (400 aa).

N(1)-(5-phospho-beta-D-ribosyl)glycinamide is bound by residues E22–L23 and E82. ATP-binding positions include R115, K157, S162–Q167, E197–V200, and E205. One can recognise an ATP-grasp domain in the interval R120–L315. Mg(2+) contacts are provided by E274 and E286. Residues D293, K362, and R369 to R370 each bind N(1)-(5-phospho-beta-D-ribosyl)glycinamide.

The protein belongs to the PurK/PurT family. As to quaternary structure, homodimer.

It carries out the reaction N(1)-(5-phospho-beta-D-ribosyl)glycinamide + formate + ATP = N(2)-formyl-N(1)-(5-phospho-beta-D-ribosyl)glycinamide + ADP + phosphate + H(+). It functions in the pathway purine metabolism; IMP biosynthesis via de novo pathway; N(2)-formyl-N(1)-(5-phospho-D-ribosyl)glycinamide from N(1)-(5-phospho-D-ribosyl)glycinamide (formate route): step 1/1. Its function is as follows. Involved in the de novo purine biosynthesis. Catalyzes the transfer of formate to 5-phospho-ribosyl-glycinamide (GAR), producing 5-phospho-ribosyl-N-formylglycinamide (FGAR). Formate is provided by PurU via hydrolysis of 10-formyl-tetrahydrofolate. In Mycolicibacterium smegmatis (strain ATCC 700084 / mc(2)155) (Mycobacterium smegmatis), this protein is Formate-dependent phosphoribosylglycinamide formyltransferase.